Consider the following 153-residue polypeptide: Glycosylation-dependent cell adhesion molecule 1 (153 aa).

The signal sequence occupies residues 1–18 (MKFLCVLLLASLAATSLA). An O-linked (GalNAc...) threonine; partial glycan is attached at threonine 34. 5 positions are modified to phosphoserine: serine 47, serine 52, serine 56, serine 58, and serine 64. Serine 78 carries O-linked (HexNAc...) serine glycosylation. Asparagine 95 carries an N-linked (GlcNAc...) asparagine glycan. The disordered stretch occupies residues 95–115 (NATLGSEETTEHTPSDASTTE). A glycan (O-linked (GalNAc...) threonine) is linked at threonine 104.

The protein belongs to the PP3/GlyCAM-1 family. In terms of tissue distribution, highly and specifically expressed in the lactating mammary gland.

The protein localises to the membrane. The protein is Glycosylation-dependent cell adhesion molecule 1 (GLYCAM1) of Bos taurus (Bovine).